Consider the following 423-residue polypeptide: Transducer protein Htr13 (423 aa).

The span at 1–19 (MTGPDNSLTDPSASPSTPV) shows a compositional bias: polar residues. A disordered region spans residues 1-21 (MTGPDNSLTDPSASPSTPVAS). The region spanning 152–388 (AVAELIERAR…ELTMMIDEAA (237 aa)) is the Methyl-accepting transducer domain.

It belongs to the methyl-accepting chemotaxis (MCP) protein family. In terms of processing, methylated by CheR.

The protein localises to the cytoplasm. Its function is as follows. Potentially involved in chemo- or phototactic signal transduction. The polypeptide is Transducer protein Htr13 (htr13) (Halobacterium salinarum (strain ATCC 29341 / DSM 671 / R1)).